A 1401-amino-acid chain; its full sequence is DNA-directed RNA polymerase subunit beta' (1401 aa).

4 residues coordinate Zn(2+): Cys-71, Cys-73, Cys-86, and Cys-89. Asp-462, Asp-464, and Asp-466 together coordinate Mg(2+). Zn(2+) contacts are provided by Cys-810, Cys-884, Cys-891, and Cys-894. The tract at residues 1378-1401 (EKQATIVPSAPEPEPLALPTPEQS) is disordered.

Belongs to the RNA polymerase beta' chain family. The RNAP catalytic core consists of 2 alpha, 1 beta, 1 beta' and 1 omega subunit. When a sigma factor is associated with the core the holoenzyme is formed, which can initiate transcription. Requires Mg(2+) as cofactor. It depends on Zn(2+) as a cofactor.

The enzyme catalyses RNA(n) + a ribonucleoside 5'-triphosphate = RNA(n+1) + diphosphate. DNA-dependent RNA polymerase catalyzes the transcription of DNA into RNA using the four ribonucleoside triphosphates as substrates. This is DNA-directed RNA polymerase subunit beta' from Rhodopseudomonas palustris (strain BisB18).